The primary structure comprises 229 residues: MTHLLIVDDEKDIVDICQTYFEYEGYQVTTTTCGKEALKLLSSDIDIMILDIMMPEVSGYDIVKKMKDMQLDIPFIYLTAKTQEHDTIYALTLGADDYIKKPFSPRELVLRTNNLLARMSKSNHSNKIEQLEFDGLVLKNLSKTLTINNIEIPMRIKEFELLWYLASREGEVISKSELLEKVWGYDYYEDANTVNVHIHRIREKLEKHDFLPYTITTVWGLGYKFERSR.

Residues 3–116 (HLLIVDDEKD…ELVLRTNNLL (114 aa)) enclose the Response regulatory domain. Asp-51 carries the post-translational modification 4-aspartylphosphate. A DNA-binding region (ompR/PhoB-type) is located at residues 128 to 227 (IEQLEFDGLV…VWGLGYKFER (100 aa)).

In terms of processing, phosphorylated by SaeS.

The protein resides in the cytoplasm. Member of the two-component regulatory system SaeR/SaeS. Probably functions as a transcriptional regulator via a specific DNA-binding domain, recognizing motifs near the promoter sequences of target genes. The chain is Response regulator SaeR (saeR) from Staphylococcus epidermidis (strain ATCC 35984 / DSM 28319 / BCRC 17069 / CCUG 31568 / BM 3577 / RP62A).